Reading from the N-terminus, the 528-residue chain is Berberine bridge enzyme-like 17 (528 aa).

The signal sequence occupies residues Met-1–Ala-19. Asn-20, Asn-35, Asn-52, and Asn-72 each carry an N-linked (GlcNAc...) asparagine glycan. A disulfide bridge links Cys-32 with Cys-94. In terms of domain architecture, FAD-binding PCMH-type spans Leu-69–Val-246. Positions His-109–Cys-171 form a cross-link, 6-(S-cysteinyl)-8alpha-(pros-histidyl)-FAD (His-Cys). Residues Asn-256, Asn-340, and Asn-439 are each glycosylated (N-linked (GlcNAc...) asparagine).

It belongs to the oxygen-dependent FAD-linked oxidoreductase family. Requires FAD as cofactor. Post-translationally, the FAD cofactor is bound via a bicovalent 6-S-cysteinyl, 8alpha-N1-histidyl FAD linkage.

It localises to the secreted. The protein resides in the cell wall. The protein is Berberine bridge enzyme-like 17 of Arabidopsis thaliana (Mouse-ear cress).